Consider the following 163-residue polypeptide: Bursicon (163 aa).

The signal sequence occupies residues 1–23 (MKSSVCVLLKVLACILLPGGLNA). 5 disulfides stabilise this stretch: Cys39–Cys88, Cys53–Cys102, Cys63–Cys123, Cys67–Cys125, and Cys85–Cys128. The CTCK domain maps to 39-129 (CQVTPVIHVL…PLECMCRPCT (91 aa)).

Heterodimer of burs and pburs.

It is found in the secreted. In terms of biological role, final heterodimeric neurohormone released at the end of the molting cycle, involved in the sclerotization (tanning) of the insect cuticle, melanization and wing spreading. In Aedes aegypti (Yellowfever mosquito), this protein is Bursicon.